Here is a 36-residue protein sequence, read N- to C-terminus: Peroxiredoxin-4 (36 aa).

Belongs to the peroxiredoxin family. AhpC/Prx1 subfamily. In terms of assembly, homodimer; disulfide-linked, upon oxidation. As to expression, venom gland.

It is found in the secreted. It catalyses the reaction a hydroperoxide + [thioredoxin]-dithiol = an alcohol + [thioredoxin]-disulfide + H2O. Its function is as follows. Venom peroxiredoxin enzyme that may play a role as part of a redox pathway leading to the structural/functional diversification of toxins through a disulfide bond engineering mechanism. The sequence is that of Peroxiredoxin-4 from Crotalus atrox (Western diamondback rattlesnake).